We begin with the raw amino-acid sequence, 844 residues long: DNA mismatch repair protein MutS (844 aa).

Residue 602–609 (GPNMSGKS) participates in ATP binding.

Belongs to the DNA mismatch repair MutS family.

This protein is involved in the repair of mismatches in DNA. It is possible that it carries out the mismatch recognition step. This protein has a weak ATPase activity. This is DNA mismatch repair protein MutS from Streptococcus pneumoniae serotype 19F (strain G54).